The following is a 123-amino-acid chain: Large ribosomal subunit protein bL12 (123 aa).

Belongs to the bacterial ribosomal protein bL12 family. Homodimer. Part of the ribosomal stalk of the 50S ribosomal subunit. Forms a multimeric L10(L12)X complex, where L10 forms an elongated spine to which 2 to 4 L12 dimers bind in a sequential fashion. Binds GTP-bound translation factors.

Its function is as follows. Forms part of the ribosomal stalk which helps the ribosome interact with GTP-bound translation factors. Is thus essential for accurate translation. In Chromobacterium violaceum (strain ATCC 12472 / DSM 30191 / JCM 1249 / CCUG 213 / NBRC 12614 / NCIMB 9131 / NCTC 9757 / MK), this protein is Large ribosomal subunit protein bL12.